A 234-amino-acid chain; its full sequence is Leucyl/phenylalanyl-tRNA--protein transferase (234 aa).

The protein belongs to the L/F-transferase family.

It localises to the cytoplasm. The catalysed reaction is N-terminal L-lysyl-[protein] + L-leucyl-tRNA(Leu) = N-terminal L-leucyl-L-lysyl-[protein] + tRNA(Leu) + H(+). It catalyses the reaction N-terminal L-arginyl-[protein] + L-leucyl-tRNA(Leu) = N-terminal L-leucyl-L-arginyl-[protein] + tRNA(Leu) + H(+). The enzyme catalyses L-phenylalanyl-tRNA(Phe) + an N-terminal L-alpha-aminoacyl-[protein] = an N-terminal L-phenylalanyl-L-alpha-aminoacyl-[protein] + tRNA(Phe). In terms of biological role, functions in the N-end rule pathway of protein degradation where it conjugates Leu, Phe and, less efficiently, Met from aminoacyl-tRNAs to the N-termini of proteins containing an N-terminal arginine or lysine. This Nitrosomonas eutropha (strain DSM 101675 / C91 / Nm57) protein is Leucyl/phenylalanyl-tRNA--protein transferase.